The primary structure comprises 339 residues: Oncoprotein MEQ (339 aa).

The disordered stretch occupies residues 1–80 (MSQEPEPGAM…ARRRRRKQTD (80 aa)). A Phosphoserine; by host CDK2 modification is found at S42. The segment at 57-84 (KQKLERRRKRNRDAARRRRRKQTDYVDK) is basic motif. The 64-residue stretch at 57-120 (KQKLERRRKR…TSLRVQLACH (64 aa)) folds into the bZIP domain. The segment covering 60–77 (LERRRKRNRDAARRRRRK) has biased composition (basic residues). The Nuclear localization signal motif lies at 62 to 78 (RRRKRNRDAARRRRRKQ). The segment at 85–113 (LHEACEELQRANEHLRKEIRDLRTECTSL) is leucine-zipper. Residues 120 to 339 (HEPVCPMAVP…VWWFPGDGRP (220 aa)) are transactivation domain. Over residues 145–160 (PEPPICTPPPPSPDEP) the composition is skewed to pro residues. A disordered region spans residues 145 to 172 (PEPPICTPPPPSPDEPNAPHCSGSQPPI).

The protein belongs to the bZIP family. Jun subfamily. As to quaternary structure, homodimer. Interacts with host JUN; this interaction allows MEQ to engage in host cell processes by disguising itself as a cellular JUN. Phosphorylated by host CDK2; this phosphorylation greatly reduces the DNA binding activity of MEQ.

It localises to the host nucleus. The protein localises to the host nucleolus. Functions as a DNA-binding transcription factor. Promotes transformation, host cell growth, host cell-cycle progression through G1/S phase, and possesses antiapoptotic activity. Forms functional heterodimers with host JUN. These heterodimers bind with high affinity DNA sequences called MEQ-responsive elements MERE I (TGACA/GTCA), while MEQ homodimers bind a second type of sites termed MERE II (ACACA). Both homo and heterodimerization of MEQ are required for oncogenesis. This is Oncoprotein MEQ (MDV005) from Gallid herpesvirus 2 (strain Chicken/Md5/ATCC VR-987) (GaHV-2).